The primary structure comprises 244 residues: Small ribosomal subunit protein uS3 (244 aa).

Residues 39–107 (IRELIKKESF…KLIINVEEIK (69 aa)) form the KH type-2 domain. Residues 216–244 (LPVYKNKKNDKNKKRRNNNRKGKSQAAKN) are disordered. Residues 220-238 (KNKKNDKNKKRRNNNRKGK) show a composition bias toward basic residues.

It belongs to the universal ribosomal protein uS3 family. As to quaternary structure, part of the 30S ribosomal subunit. Forms a tight complex with proteins S10 and S14.

Its function is as follows. Binds the lower part of the 30S subunit head. Binds mRNA in the 70S ribosome, positioning it for translation. This Finegoldia magna (strain ATCC 29328 / DSM 20472 / WAL 2508) (Peptostreptococcus magnus) protein is Small ribosomal subunit protein uS3.